Reading from the N-terminus, the 103-residue chain is Large ribosomal subunit protein uL24 (103 aa).

It belongs to the universal ribosomal protein uL24 family. In terms of assembly, part of the 50S ribosomal subunit.

One of two assembly initiator proteins, it binds directly to the 5'-end of the 23S rRNA, where it nucleates assembly of the 50S subunit. In terms of biological role, one of the proteins that surrounds the polypeptide exit tunnel on the outside of the subunit. The protein is Large ribosomal subunit protein uL24 of Dehalococcoides mccartyi (strain ATCC BAA-2100 / JCM 16839 / KCTC 5957 / BAV1).